The chain runs to 208 residues: uncharacterized protein (208 aa).

Disordered stretches follow at residues 91–115, 127–156, and 182–208; these read PGQA…PSQD, QSWS…KRPG, and NKLG…RKFK. Positions 127–136 are enriched in polar residues; it reads QSWSSGTSRP.

This is an uncharacterized protein from Rattus norvegicus (Rat).